Here is a 257-residue protein sequence, read N- to C-terminus: DNA repair protein RecO (257 aa).

The protein belongs to the RecO family.

Functionally, involved in DNA repair and RecF pathway recombination. The protein is DNA repair protein RecO of Clostridium kluyveri (strain ATCC 8527 / DSM 555 / NBRC 12016 / NCIMB 10680 / K1).